A 91-amino-acid polypeptide reads, in one-letter code: Small integral membrane protein 12-B (91 aa).

A helical transmembrane segment spans residues 12–34; it reads YAPYITFPVAFVVGAVGYQLEWF.

It belongs to the SMIM12 family.

It localises to the membrane. In Xenopus laevis (African clawed frog), this protein is Small integral membrane protein 12-B (smim12-b).